The sequence spans 59 residues: Photosystem II reaction center protein K (59 aa).

The propeptide occupies 1-22 (MLNIFSLIGLNSALYSSSCFFA). The chain crosses the membrane as a helical span at residues 30–50 (FLSPIVDFMPVIPLLFFLLAF).

The protein belongs to the PsbK family. PSII is composed of 1 copy each of membrane proteins PsbA, PsbB, PsbC, PsbD, PsbE, PsbF, PsbH, PsbI, PsbJ, PsbK, PsbL, PsbM, PsbT, PsbX, PsbY, PsbZ, Psb30/Ycf12, at least 3 peripheral proteins of the oxygen-evolving complex and a large number of cofactors. It forms dimeric complexes.

It is found in the plastid. The protein resides in the chloroplast thylakoid membrane. Its function is as follows. One of the components of the core complex of photosystem II (PSII). PSII is a light-driven water:plastoquinone oxidoreductase that uses light energy to abstract electrons from H(2)O, generating O(2) and a proton gradient subsequently used for ATP formation. It consists of a core antenna complex that captures photons, and an electron transfer chain that converts photonic excitation into a charge separation. The protein is Photosystem II reaction center protein K of Silene latifolia (White campion).